The following is a 352-amino-acid chain: Mitochondrial ubiquitin ligase activator of NFKB 1 (352 aa).

Residues 1-8 are Cytoplasmic-facing; the sequence is MESGGRPS. Residues 9-29 form a helical membrane-spanning segment; it reads LCQFILLGTTSVVTAALYSVY. At 30-238 the chain is on the mitochondrial intermembrane side; that stretch reads RQKARVSQEL…LLQRQESSVR (209 aa). Lys52 participates in a covalent cross-link: Glycyl lysine isopeptide (Lys-Gly) (interchain with G-Cter in ubiquitin). The chain crosses the membrane as a helical span at residues 239–259; that stretch reads LWKVLALVFGFATCATLFFIL. The Cytoplasmic portion of the chain corresponds to 260–352; sequence RKQYLQRQER…ITRVIPLYNS (93 aa). Glycyl lysine isopeptide (Lys-Gly) (interchain with G-Cter in ubiquitin) cross-links involve residues Lys273 and Lys299. The RING-type zinc finger occupies 302–340; that stretch reads CVVCLSSFKSCVFLECGHVCSCTECYRALPEPKKCPICR.

In terms of assembly, homooligomer. Interacts with MAP3K7/TAK1. Interacts with UBC9. Interacts with and sumoylates DNM1L. Interacts with MAVS. Interacts with TP53 (via N-terminus); the interaction leads to ubiquitination and proteasomal degradation of TP53. Ubiquitinated by PRKN during mitophagy, leading to its degradation and enhancement of mitophagy. Deubiquitinated by USP30. As to expression, widely expressed with highest levels in the heart, skeletal muscle, placenta, kidney and liver. Barely detectable in colon and thymus.

The protein localises to the mitochondrion outer membrane. Its subcellular location is the peroxisome. It catalyses the reaction S-ubiquitinyl-[E2 ubiquitin-conjugating enzyme]-L-cysteine + [acceptor protein]-L-lysine = [E2 ubiquitin-conjugating enzyme]-L-cysteine + N(6)-ubiquitinyl-[acceptor protein]-L-lysine.. The protein operates within protein modification; protein ubiquitination. It participates in protein modification; protein sumoylation. Functionally, exhibits weak E3 ubiquitin-protein ligase activity. E3 ubiquitin ligases accept ubiquitin from an E2 ubiquitin-conjugating enzyme in the form of a thioester and then directly transfer the ubiquitin to targeted substrates. Can ubiquitinate AKT1 preferentially at 'Lys-284' involving 'Lys-48'-linked polyubiquitination and seems to be involved in regulation of Akt signaling by targeting phosphorylated Akt to proteasomal degradation. Mediates polyubiquitination of cytoplasmic TP53 at 'Lys-24' which targets TP53 for proteasomal degradation, thus reducing TP53 levels in the cytoplasm and mitochondrion. Proposed to preferentially act as a SUMO E3 ligase at physiological concentrations. Plays a role in the control of mitochondrial morphology by promoting mitochondrial fragmentation, and influences mitochondrial localization. Likely to promote mitochondrial fission through negatively regulating the mitochondrial fusion proteins MFN1 and MFN2, acting in a pathway that is parallel to the PRKN/PINK1 regulatory pathway. May also be involved in the sumoylation of the membrane fission protein DNM1L. Inhibits cell growth. When overexpressed, activates JNK through MAP3K7/TAK1 and induces caspase-dependent apoptosis. Involved in the modulation of innate immune defense against viruses by inhibiting RIGI-dependent antiviral response. Can mediate RIGI sumoylation and disrupt its polyubiquitination. This Homo sapiens (Human) protein is Mitochondrial ubiquitin ligase activator of NFKB 1 (MUL1).